The chain runs to 110 residues: Ribonuclease P protein component (110 aa).

Belongs to the RnpA family. In terms of assembly, consists of a catalytic RNA component (M1 or rnpB) and a protein subunit.

The enzyme catalyses Endonucleolytic cleavage of RNA, removing 5'-extranucleotides from tRNA precursor.. Its function is as follows. RNaseP catalyzes the removal of the 5'-leader sequence from pre-tRNA to produce the mature 5'-terminus. It can also cleave other RNA substrates such as 4.5S RNA. The protein component plays an auxiliary but essential role in vivo by binding to the 5'-leader sequence and broadening the substrate specificity of the ribozyme. In Mesoplasma florum (strain ATCC 33453 / NBRC 100688 / NCTC 11704 / L1) (Acholeplasma florum), this protein is Ribonuclease P protein component.